Reading from the N-terminus, the 760-residue chain is Prolyl endopeptidase FAP (760 aa).

Over 1–4 (MKTW) the chain is Cytoplasmic. The helical; Signal-anchor for type II membrane protein transmembrane segment at 5 to 25 (VKIVFGVATSAVLALLVMCIV) threads the bilayer. Topologically, residues 26-760 (LRPSRVHNSE…FLKQCFSLSD (735 aa)) are extracellular. N-linked (GlcNAc...) asparagine glycosylation is found at Asn-49, Asn-92, and Asn-99. Positions 203 and 204 each coordinate substrate. Asn-227 and Asn-314 each carry an N-linked (GlcNAc...) asparagine glycan. Intrachain disulfides connect Cys-321/Cys-332, Cys-438/Cys-441, and Cys-448/Cys-466. Ser-624 functions as the Charge relay system in the catalytic mechanism. An intrachain disulfide couples Cys-643 to Cys-755. Residue Asn-679 is glycosylated (N-linked (GlcNAc...) asparagine). Catalysis depends on charge relay system residues Asp-702 and His-734.

The protein belongs to the peptidase S9B family. Homodimer; homodimerization is required for activity of both plasma membrane and soluble forms. The monomer is inactive. Heterodimer with DPP4. Interacts with PLAUR; the interaction occurs at the cell surface of invadopodia membranes. Interacts with ITGB1. Interacts with ITGA3. Associates with integrin alpha-3/beta-1; the association occurs in a collagen-dependent manner at the cell surface of invadopodia membranes. N-glycosylated. Post-translationally, the N-terminus may be blocked. In terms of tissue distribution, expressed in adipose tissue. Expressed in the dermal fibroblasts in the fetal skin. Expressed in the granulation tissue of healing wounds and on reactive stromal fibroblast in epithelial cancers. Expressed in activated fibroblast-like synoviocytes from inflamed synovial tissues. Expressed in activated hepatic stellate cells (HSC) and myofibroblasts from cirrhotic liver, but not detected in normal liver. Expressed in glioma cells (at protein level). Expressed in glioblastomas and glioma cells. Isoform 1 and isoform 2 are expressed in melanoma, carcinoma and fibroblast cell lines.

It localises to the cell surface. Its subcellular location is the cell membrane. The protein resides in the cell projection. The protein localises to the lamellipodium membrane. It is found in the invadopodium membrane. It localises to the ruffle membrane. Its subcellular location is the membrane. The protein resides in the secreted. The protein localises to the cytoplasm. The enzyme catalyses Hydrolysis of Pro-|-Xaa &gt;&gt; Ala-|-Xaa in oligopeptides.. It catalyses the reaction Release of an N-terminal dipeptide, Xaa-Yaa-|-Zaa-, from a polypeptide, preferentially when Yaa is Pro, provided Zaa is neither Pro nor hydroxyproline.. Gelatinase activity is inhibited by serine-protease inhibitors, such as phenylmethylsulfonyl fluoride (PMSF), 4-(2-aminoethyl)-benzenesulfonyl fluoride hydrochloride (AEBSF), 4-amidino phenylsulfonyl fluoride (APSF) and diisopropyl fluorophosphate (DFP), N-ethylmaleimide (NEM) and phenylmethylsulfonyl fluoride (PMSF). Dipeptidyl peptidase activity is inhibited by 2,2'-azino-bis(3-ethylbenzthiazoline-6-sulfonic acid), diisopropylfluorophosphate (DFP). Prolyl endopeptidase activity is inhibited by the boronic acid peptide Ac-Gly-BoroPro, Ac-Gly-Pro-chloromethyl ketone and Thr-Ser-Gly-chloromethyl ketone. Functionally, cell surface glycoprotein serine protease that participates in extracellular matrix degradation and involved in many cellular processes including tissue remodeling, fibrosis, wound healing, inflammation and tumor growth. Both plasma membrane and soluble forms exhibit post-proline cleaving endopeptidase activity, with a marked preference for Ala/Ser-Gly-Pro-Ser/Asn/Ala consensus sequences, on substrate such as alpha-2-antiplasmin SERPINF2 and SPRY2. Degrade also gelatin, heat-denatured type I collagen, but not native collagen type I and IV, vitronectin, tenascin, laminin, fibronectin, fibrin or casein. Also has dipeptidyl peptidase activity, exhibiting the ability to hydrolyze the prolyl bond two residues from the N-terminus of synthetic dipeptide substrates provided that the penultimate residue is proline, with a preference for Ala-Pro, Ile-Pro, Gly-Pro, Arg-Pro and Pro-Pro. Natural neuropeptide hormones for dipeptidyl peptidase are the neuropeptide Y (NPY), peptide YY (PYY), substance P (TAC1) and brain natriuretic peptide 32 (NPPB). The plasma membrane form, in association with either DPP4, PLAUR or integrins, is involved in the pericellular proteolysis of the extracellular matrix (ECM), and hence promotes cell adhesion, migration and invasion through the ECM. Plays a role in tissue remodeling during development and wound healing. Participates in the cell invasiveness towards the ECM in malignant melanoma cancers. Enhances tumor growth progression by increasing angiogenesis, collagen fiber degradation and apoptosis and by reducing antitumor response of the immune system. Promotes glioma cell invasion through the brain parenchyma by degrading the proteoglycan brevican. Acts as a tumor suppressor in melanocytic cells through regulation of cell proliferation and survival in a serine protease activity-independent manner. This chain is Prolyl endopeptidase FAP, found in Homo sapiens (Human).